Here is a 101-residue protein sequence, read N- to C-terminus: MAKQSMKAREVKRVKLADKFFAKRAELKTIISDVNASDEDRWDAVLKLQTLPRDSSPSRQRNRCRQTGRPHAFLRKFGLSRIKVREAAMRGEIPGLRKASW.

The protein belongs to the universal ribosomal protein uS14 family. Part of the 30S ribosomal subunit. Contacts proteins S3 and S10.

Functionally, binds 16S rRNA, required for the assembly of 30S particles and may also be responsible for determining the conformation of the 16S rRNA at the A site. This is Small ribosomal subunit protein uS14 from Sodalis glossinidius (strain morsitans).